Consider the following 179-residue polypeptide: Acireductone dioxygenase (179 aa).

Fe(2+) contacts are provided by histidine 97, histidine 99, glutamate 103, and histidine 141. 4 residues coordinate Ni(2+): histidine 97, histidine 99, glutamate 103, and histidine 141.

The protein belongs to the acireductone dioxygenase (ARD) family. As to quaternary structure, monomer. The cofactor is Fe(2+). Ni(2+) is required as a cofactor.

It carries out the reaction 1,2-dihydroxy-5-(methylsulfanyl)pent-1-en-3-one + O2 = 3-(methylsulfanyl)propanoate + CO + formate + 2 H(+). The catalysed reaction is 1,2-dihydroxy-5-(methylsulfanyl)pent-1-en-3-one + O2 = 4-methylsulfanyl-2-oxobutanoate + formate + 2 H(+). The protein operates within amino-acid biosynthesis; L-methionine biosynthesis via salvage pathway; L-methionine from S-methyl-5-thio-alpha-D-ribose 1-phosphate: step 5/6. Functionally, catalyzes 2 different reactions between oxygen and the acireductone 1,2-dihydroxy-3-keto-5-methylthiopentene (DHK-MTPene) depending upon the metal bound in the active site. Fe-containing acireductone dioxygenase (Fe-ARD) produces formate and 2-keto-4-methylthiobutyrate (KMTB), the alpha-ketoacid precursor of methionine in the methionine recycle pathway. Ni-containing acireductone dioxygenase (Ni-ARD) produces methylthiopropionate, carbon monoxide and formate, and does not lie on the methionine recycle pathway. This is Acireductone dioxygenase from Granulibacter bethesdensis (strain ATCC BAA-1260 / CGDNIH1).